The primary structure comprises 704 residues: Polyribonucleotide nucleotidyltransferase (704 aa).

Mg(2+)-binding residues include Asp-490 and Asp-496. The KH domain occupies 557–616 (PKIEMIQIKPAKIKDVIGKGGETINSIIDETGVKIDIDQDGNVSIASSDAEMIKKAIKII). The S1 motif domain maps to 626–694 (GQVYLAKVVR…KQGRVNVSRK (69 aa)).

Belongs to the polyribonucleotide nucleotidyltransferase family. Requires Mg(2+) as cofactor.

It localises to the cytoplasm. It carries out the reaction RNA(n+1) + phosphate = RNA(n) + a ribonucleoside 5'-diphosphate. Its function is as follows. Involved in mRNA degradation. Catalyzes the phosphorolysis of single-stranded polyribonucleotides processively in the 3'- to 5'-direction. This chain is Polyribonucleotide nucleotidyltransferase, found in Enterococcus faecalis (strain ATCC 700802 / V583).